Here is a 137-residue protein sequence, read N- to C-terminus: Protein PsiE homolog (137 aa).

The next 4 helical transmembrane spans lie at 15–35 (LRITLNLALIMVGFTLVAFLI), 55–75 (YYMTQDILTFFLYFEFIALIV), 82–102 (FHFPLRYFIYIGITAIIRFII), and 108–128 (ATSTLILSGAILLLVAALFLA).

The protein belongs to the PsiE family.

It is found in the cell membrane. The sequence is that of Protein PsiE homolog from Listeria innocua serovar 6a (strain ATCC BAA-680 / CLIP 11262).